The chain runs to 495 residues: MSSSPSRKNPRVLFVTSEVFPLCKTGGLGDVSAALPAALRELKADVRLLVPGYPSVLSGLKYKRKLAEFDLLPHFPPTTLFSSRLQINESVSLPLYVIHCPELYQRPGGIYLDDDGQDWPDNAQRFGLLSKMGALLASDASPLSWIPDIIHCNDWQSGLTPAYLHYHSGKKAASLMTLHNLAFQGCFPPDEVARLGLPPESFSVHGVEYYGNLSFLKAGIYYATRITTVSPTYAREIQHEPLGFGLQGLLAERSNAITGIINGIDNTVWNPATDPHIVKKYSSRNLAAKKINKLALQREMGLEENETIPLFAGISRLSYQKGYDILLQVAPMLADLPAQLVLLGKGDQSLEKQLVMLAQTNPARIAVRIDYDEALSHRINASADCFLMPSRFEPCGLNQMYSQRYGTPPIVHTTGGLIDTVTDLAPDTPAGESASGFHFHEMTADAFMNGIGRAIDAYYNTRLWKTLQHNGMRKDFSWRSSALAYLSIYSLLMQR.

An ADP-alpha-D-glucose-binding site is contributed by lysine 24.

Belongs to the glycosyltransferase 1 family. Bacterial/plant glycogen synthase subfamily.

The enzyme catalyses [(1-&gt;4)-alpha-D-glucosyl](n) + ADP-alpha-D-glucose = [(1-&gt;4)-alpha-D-glucosyl](n+1) + ADP + H(+). Its pathway is glycan biosynthesis; glycogen biosynthesis. In terms of biological role, synthesizes alpha-1,4-glucan chains using ADP-glucose. The protein is Glycogen synthase of Nitrosomonas europaea (strain ATCC 19718 / CIP 103999 / KCTC 2705 / NBRC 14298).